The following is a 283-amino-acid chain: ACT domain-containing protein DS12, chloroplastic (283 aa).

The N-terminal 56 residues, 1–56 (MAEMAVTAALRPCSGVSPAVSGTSHRRRRPAAWRALAPPPPHAGLRLSSPAVRVPR), are a transit peptide targeting the chloroplast. Positions 14 to 78 (SGVSPAVSGT…SNTDTVPTPK (65 aa)) are disordered. Low complexity predominate over residues 48–63 (SSPAVRVPRAASSAAV). ACT domains lie at 91 to 171 (IVEI…ASSQ) and 206 to 276 (LLVV…LRRP).

The protein localises to the plastid. It is found in the chloroplast. This is ACT domain-containing protein DS12, chloroplastic from Oryza sativa subsp. indica (Rice).